We begin with the raw amino-acid sequence, 994 residues long: Sarcoplasmic/endoplasmic reticulum calcium ATPase 1 (994 aa).

Topologically, residues 1–48 (MENAHAKTAEECLAFFGVNESVGLSGEQVRRALEKYGHNELPAEEGKT) are cytoplasmic. A helical transmembrane segment spans residues 49-69 (IWELVVEQFEDLLVRILLLAA). Residues 70 to 89 (CISFVLAWFEEGEETITAFV) lie on the Lumenal side of the membrane. A helical membrane pass occupies residues 90-110 (EPFVILLILIANAVVGVWQER). The Cytoplasmic segment spans residues 111–253 (NAENAIEALK…QDKTPLQQKL (143 aa)). The chain crosses the membrane as a helical span at residues 254-273 (DEFGEQLSKVISLICVAVWL). Residues 274-295 (INIGHFNDPVHGGSWIRGAIYY) are Lumenal-facing. A helical transmembrane segment spans residues 296 to 313 (FKIAVALAVAAIPEGLPA). Valine 304, alanine 305, isoleucine 307, and glutamate 309 together coordinate Ca(2+). The Cytoplasmic portion of the chain corresponds to 314 to 757 (VITTCLALGT…EEGRAIYNNM (444 aa)). Aspartate 351 (4-aspartylphosphate intermediate) is an active-site residue. Mg(2+) is bound by residues aspartate 351 and threonine 353. The ATP site is built by threonine 353, glutamate 442, arginine 489, lysine 515, arginine 560, threonine 625, glycine 626, aspartate 627, arginine 678, and lysine 684. Aspartate 703 serves as a coordination point for Mg(2+). Asparagine 706 contributes to the ATP binding site. Residues 758–777 (KQFIRYLISSNVGEVVCIFL) traverse the membrane as a helical segment. Ca(2+) is bound by residues asparagine 768 and glutamate 771. Topologically, residues 778–787 (TAALGLPEAL) are lumenal. The helical transmembrane segment at 788–808 (IPVQLLWVNLVTDGLPATALG) threads the bilayer. Residues 788–808 (IPVQLLWVNLVTDGLPATALG) form an interaction with PLN region. Positions 796, 799, and 800 each coordinate Ca(2+). At 809–828 (FNPPDLDIMDKPPRSPKEPL) the chain is on the cytoplasmic side. Residues 829 to 851 (ISGWLFFRYLAIGGYVGAATVGA) traverse the membrane as a helical segment. The Lumenal segment spans residues 852–897 (AAWWFLYAEDGPSLTYHQLTHFMQCTHHNAEFEGVDCDIFESPVPM). Cysteine 876 and cysteine 888 are oxidised to a cystine. A helical membrane pass occupies residues 898 to 917 (TMALSVLVTIEMCNALNSLS). Glutamate 908 provides a ligand contact to Ca(2+). Over 918–930 (ENQSLLRMPPWVN) the chain is Cytoplasmic. A helical membrane pass occupies residues 931-949 (IWLVGSICLSMSLHFVILY). The segment at 932-943 (WLVGSICLSMSL) is interaction with PLN. Residues 950–964 (VDPLPMIFKLTHLDL) are Lumenal-facing. A helical membrane pass occupies residues 965–985 (AHWLVVLRISFPVILLDEALK). Topologically, residues 986 to 994 (FVARNYLEA) are cytoplasmic.

The protein belongs to the cation transport ATPase (P-type) (TC 3.A.3) family. Type IIA subfamily. As to quaternary structure, interacts with sarcolipin (SLN). Interacts with phospholamban (PLN). Interacts with myoregulin (MRLN). Interacts with DWORF. Mg(2+) is required as a cofactor.

It is found in the endoplasmic reticulum membrane. Its subcellular location is the sarcoplasmic reticulum membrane. The catalysed reaction is Ca(2+)(in) + ATP + H2O = Ca(2+)(out) + ADP + phosphate + H(+). Inhibited by sarcolipin (SLN) and myoregulin (MRLN). Also shown to be inhibited by phospholamban (PLN) in vitro. Enhanced by DWORF; DWORF increases activity by displacing sarcolipin (SLN), phospholamban (PLN) and myoregulin (MRLN). Functionally, key regulator of striated muscle performance by acting as the major Ca(2+) ATPase responsible for the reuptake of cytosolic Ca(2+) into the sarcoplasmic reticulum. Catalyzes the hydrolysis of ATP coupled with the translocation of calcium from the cytosol to the sarcoplasmic reticulum lumen. Contributes to calcium sequestration involved in muscular excitation/contraction. The sequence is that of Sarcoplasmic/endoplasmic reticulum calcium ATPase 1 (ATP2A1) from Gallus gallus (Chicken).